A 347-amino-acid polypeptide reads, in one-letter code: Selenide, water dikinase (347 aa).

Cysteine 17 is a catalytic residue. ATP is bound by residues lysine 20 and threonine 48–aspartate 50. Aspartate 51 lines the Mg(2+) pocket. Residues aspartate 68, aspartate 91, and glycine 139–serine 141 each bind ATP. Aspartate 91 contributes to the Mg(2+) binding site. Residue aspartate 227 coordinates Mg(2+).

It belongs to the selenophosphate synthase 1 family. Class I subfamily. In terms of assembly, homodimer. Requires Mg(2+) as cofactor.

The enzyme catalyses hydrogenselenide + ATP + H2O = selenophosphate + AMP + phosphate + 2 H(+). Functionally, synthesizes selenophosphate from selenide and ATP. The protein is Selenide, water dikinase of Shigella flexneri serotype 5b (strain 8401).